An 88-amino-acid chain; its full sequence is UPF0335 protein WRi_003770 (88 aa).

Belongs to the UPF0335 family.

In Wolbachia sp. subsp. Drosophila simulans (strain wRi), this protein is UPF0335 protein WRi_003770.